Consider the following 397-residue polypeptide: Tryptophan synthase beta chain (397 aa).

An N6-(pyridoxal phosphate)lysine modification is found at Lys-90.

Belongs to the TrpB family. Tetramer of two alpha and two beta chains. Pyridoxal 5'-phosphate serves as cofactor.

The catalysed reaction is (1S,2R)-1-C-(indol-3-yl)glycerol 3-phosphate + L-serine = D-glyceraldehyde 3-phosphate + L-tryptophan + H2O. It participates in amino-acid biosynthesis; L-tryptophan biosynthesis; L-tryptophan from chorismate: step 5/5. Its function is as follows. The beta subunit is responsible for the synthesis of L-tryptophan from indole and L-serine. The chain is Tryptophan synthase beta chain from Nitrosomonas europaea (strain ATCC 19718 / CIP 103999 / KCTC 2705 / NBRC 14298).